A 264-amino-acid chain; its full sequence is Phosphonates import ATP-binding protein PhnC (264 aa).

The ABC transporter domain maps to 8 to 255 (LQAENLRMTF…KLIEIYGPEF (248 aa)). 40–47 (GPSGSGKS) is a binding site for ATP.

This sequence belongs to the ABC transporter superfamily. Phosphonates importer (TC 3.A.1.9.1) family. As to quaternary structure, the complex is composed of two ATP-binding proteins (PhnC), two transmembrane proteins (PhnE) and a solute-binding protein (PhnD).

The protein localises to the cell inner membrane. The enzyme catalyses phosphonate(out) + ATP + H2O = phosphonate(in) + ADP + phosphate + H(+). Part of the ABC transporter complex PhnCDE involved in phosphonates import. Responsible for energy coupling to the transport system. This is Phosphonates import ATP-binding protein PhnC from Maricaulis maris (strain MCS10) (Caulobacter maris).